A 529-amino-acid chain; its full sequence is Bifunctional purine biosynthesis protein PurH (529 aa).

The MGS-like domain maps to 3–149; the sequence is DRIPLKRALI…KNHAFVTVVV (147 aa).

It belongs to the PurH family.

It catalyses the reaction (6R)-10-formyltetrahydrofolate + 5-amino-1-(5-phospho-beta-D-ribosyl)imidazole-4-carboxamide = 5-formamido-1-(5-phospho-D-ribosyl)imidazole-4-carboxamide + (6S)-5,6,7,8-tetrahydrofolate. The catalysed reaction is IMP + H2O = 5-formamido-1-(5-phospho-D-ribosyl)imidazole-4-carboxamide. Its pathway is purine metabolism; IMP biosynthesis via de novo pathway; 5-formamido-1-(5-phospho-D-ribosyl)imidazole-4-carboxamide from 5-amino-1-(5-phospho-D-ribosyl)imidazole-4-carboxamide (10-formyl THF route): step 1/1. It participates in purine metabolism; IMP biosynthesis via de novo pathway; IMP from 5-formamido-1-(5-phospho-D-ribosyl)imidazole-4-carboxamide: step 1/1. This Paracoccus denitrificans (strain Pd 1222) protein is Bifunctional purine biosynthesis protein PurH.